Consider the following 190-residue polypeptide: Peptidyl-prolyl cis-trans isomerase A (190 aa).

The first 24 residues, 1–24, serve as a signal peptide directing secretion; sequence MLKSTLAAVAAVFALSALSPAALA. The 162-residue stretch at 27–188 folds into the PPIase cyclophilin-type domain; it reads GDPHVLLTTS…KPVVILSAKV (162 aa).

It belongs to the cyclophilin-type PPIase family.

It is found in the periplasm. It catalyses the reaction [protein]-peptidylproline (omega=180) = [protein]-peptidylproline (omega=0). PPIases accelerate the folding of proteins. It catalyzes the cis-trans isomerization of proline imidic peptide bonds in oligopeptides. This Salmonella typhimurium (strain LT2 / SGSC1412 / ATCC 700720) protein is Peptidyl-prolyl cis-trans isomerase A (ppiA).